A 2531-amino-acid polypeptide reads, in one-letter code: Putative neurobeachin homolog (2531 aa).

3 stretches are compositionally biased toward acidic residues: residues 1–10 (MDISETEYND), 26–35 (EDEVNDEESN), and 62–74 (EPSD…EESE). Disordered stretches follow at residues 1–101 (MDIS…SPPP), 1363–1398 (NDGD…DNGG), 1420–1440 (EELK…MPPQ), and 1642–1670 (RFVP…EISE). Residues 1363–1379 (NDGDHASIKNGSDHSEN) show a composition bias toward basic and acidic residues. The span at 1427 to 1440 (QSNGRRPSTLMPPQ) shows a compositional bias: polar residues. Residues 1650–1670 (SRHEEANLPEGEKNEEPEISE) show a composition bias toward basic and acidic residues. The BEACH-type PH domain maps to 1714 to 1822 (PSSQSACFST…TVRKVVYQLP (109 aa)). A BEACH domain is found at 1841-2130 (MTPRQLFKHS…QLLAEAHPPR (290 aa)). WD repeat units follow at residues 2289–2332 (GHGD…GFIA), 2350–2389 (GHEA…LRRI), 2429–2468 (LSEE…KLYT), and 2471–2510 (PLNS…WHYE).

This sequence belongs to the WD repeat neurobeachin family. As to quaternary structure, interacts with RII subunit of PKA.

It is found in the cytoplasm. It localises to the membrane. The protein localises to the nucleus. In terms of biological role, binds to type II regulatory subunits of protein kinase A and anchors/targets them to the membrane. May anchor the kinase to cytoskeletal and/or organelle-associated proteins. Regulates endosomal traffic in polarized epithelial cells such as the vulval precursor cells and intestinal cells. Thought to act as a negative regulator of lin-12 activity in vulval precursor cells. May have a role in the internalization process from basolateral surface of polarized epithelial cells. In Caenorhabditis briggsae, this protein is Putative neurobeachin homolog.